A 308-amino-acid chain; its full sequence is MDLKLMKTRNVYFIFSTFMILFSLFSIFTKGFNLGIDFTGGNIYQMKFEKPVSKEAMDKTLKEMASKYPSLKSNKVQYSEGNTVLLRTQIADEKEKSAILEELKAEQGNYELIKADAVGAVVGNELAKNALWALALGSILILIYITIRFEWIYALSSVLALLHDVLVTIGFISFFQFEVDTPFIAAILTILGYSMNDTIVIFDRIRENDHKYGGKKPFADVIDESVNKVFIRSVYTSLTTLLALAALLIFGGSTLRTFNITLLVGIVYGTYSSIWLASPLVYLLRRFKKPPKQEKNGKKDRSMEKVVV.

The next 6 helical transmembrane spans lie at 12–32 (YFIF…TKGF), 127–147 (AKNA…YITI), 152–172 (IYAL…IGFI), 182–202 (PFIA…IVIF), 234–254 (VYTS…GGST), and 262–282 (LLVG…PLVY).

It belongs to the SecD/SecF family. SecF subfamily. In terms of assembly, forms a complex with SecD. Part of the essential Sec protein translocation apparatus which comprises SecA, SecYEG and auxiliary proteins SecDF. Other proteins may also be involved.

The protein resides in the cell inner membrane. Its function is as follows. Part of the Sec protein translocase complex. Interacts with the SecYEG preprotein conducting channel. SecDF uses the proton motive force (PMF) to complete protein translocation after the ATP-dependent function of SecA. This is Protein translocase subunit SecF from Sebaldella termitidis (strain ATCC 33386 / NCTC 11300).